A 400-amino-acid chain; its full sequence is Tryptophan synthase beta chain (400 aa).

At lysine 95 the chain carries N6-(pyridoxal phosphate)lysine.

Belongs to the TrpB family. Tetramer of two alpha and two beta chains. Requires pyridoxal 5'-phosphate as cofactor.

It carries out the reaction (1S,2R)-1-C-(indol-3-yl)glycerol 3-phosphate + L-serine = D-glyceraldehyde 3-phosphate + L-tryptophan + H2O. It participates in amino-acid biosynthesis; L-tryptophan biosynthesis; L-tryptophan from chorismate: step 5/5. The beta subunit is responsible for the synthesis of L-tryptophan from indole and L-serine. In Chlorobaculum tepidum (strain ATCC 49652 / DSM 12025 / NBRC 103806 / TLS) (Chlorobium tepidum), this protein is Tryptophan synthase beta chain.